The following is a 188-amino-acid chain: tRNA(Phe) 7-((3-amino-3-carboxypropyl)-4-demethylwyosine(37)-N(4))-methyltransferase (188 aa).

This sequence belongs to the TYW3 family.

The catalysed reaction is 4-demethyl-7-[(3S)-3-amino-3-carboxypropyl]wyosine(37) in tRNA(Phe) + S-adenosyl-L-methionine = 7-[(3S)-3-amino-3-carboxypropyl]wyosine(37) in tRNA(Phe) + S-adenosyl-L-homocysteine + H(+). S-adenosyl-L-methionine-dependent methyltransferase that acts as a component of the wyosine derivatives biosynthesis pathway. Probably methylates N-4 position of wybutosine-86 to produce wybutosine-72. The polypeptide is tRNA(Phe) 7-((3-amino-3-carboxypropyl)-4-demethylwyosine(37)-N(4))-methyltransferase (Aeropyrum pernix (strain ATCC 700893 / DSM 11879 / JCM 9820 / NBRC 100138 / K1)).